A 97-amino-acid chain; its full sequence is Protein transport protein SFT1 (97 aa).

Over 1-74 (MSNSRYSQTE…RLTRSLKAGN (74 aa)) the chain is Cytoplasmic. Residues 7–69 (SQTESNNDRK…KNSSSRLTRS (63 aa)) form the t-SNARE coiled-coil homology domain. A helical; Anchor for type IV membrane protein membrane pass occupies residues 75-94 (SIWRMVGLALLIFFILYTLF). The Lumenal segment spans residues 95–97 (KLF).

As to quaternary structure, component of a SNARE complex consisting of SED5, GOS1, YKT6 and SFT1.

Its subcellular location is the golgi apparatus membrane. Functionally, vesicle SNARE required for retrograde transport within the Golgi complex. This is Protein transport protein SFT1 (SFT1) from Saccharomyces cerevisiae (strain ATCC 204508 / S288c) (Baker's yeast).